Here is a 157-residue protein sequence, read N- to C-terminus: uncharacterized protein (157 aa).

This is an uncharacterized protein from Schizosaccharomyces pombe (strain 972 / ATCC 24843) (Fission yeast).